We begin with the raw amino-acid sequence, 251 residues long: Short chain dehydrogenase gsfK (251 aa).

The NADP(+) site is built by Leu-14, Thr-33, Glu-60, Asn-88, and Lys-122. Active-site proton donor residues include Ser-143 and Tyr-161. Tyr-161, Lys-165, Val-192, and Thr-194 together coordinate NADP(+). Lys-165 functions as the Lowers pKa of active site Tyr in the catalytic mechanism.

This sequence belongs to the short-chain dehydrogenases/reductases (SDR) family.

The protein operates within secondary metabolite biosynthesis; terpenoid biosynthesis. Short chain dehydrogenase; part of the gene cluster that mediates the biosynthesis of griseofulvin, an important antifungal drug that has been in use for a long time for treating dermatophyte infections. The first step of the pathway is the formation of the heptaketide backbone by gsfA which is initiated by priming with acetyl-CoA, followed by sequential condensations of 6 malonyl-CoA units. The resulting benzophenone can undergo a spontaneous dehydration to form norlichexanthone. However, the true precursor for the griseofulvin biosynthesis is not norlichexanthone, but the heptaketide benzophenone that is O-methylated at 3-OH by gsfB to produce griseophenone D which is further methylated at 9-OH by gsfC to yield griseophenone C. Griseophenone C is then substrate of halogenase gsfI which is responsible for the regio-specific chlorination at the C13 position to form griseophenone B. The cytochrome P450 gsfF catalyzes the coupling of orcinol and phloroglucinol rings in griseophenone B to form desmethyl-dehydrogriseofulvin A which is further methylated at 5-OH by gsfD to yield dehydrogriseofulvin. Finally, gsfE performs stereospecific reduction of enone 18 of dehydrogriseofulvin to afford the final product griseofulvin. The exact role of gsfK within the pathway has not been identified yet. The protein is Short chain dehydrogenase gsfK of Penicillium aethiopicum.